A 499-amino-acid polypeptide reads, in one-letter code: Probable cytosol aminopeptidase (499 aa).

Residues K264 and D269 each coordinate Mn(2+). Residue K276 is part of the active site. Mn(2+)-binding residues include D287, D346, and E348. Residue R350 is part of the active site.

The protein belongs to the peptidase M17 family. The cofactor is Mn(2+).

Its subcellular location is the cytoplasm. It catalyses the reaction Release of an N-terminal amino acid, Xaa-|-Yaa-, in which Xaa is preferably Leu, but may be other amino acids including Pro although not Arg or Lys, and Yaa may be Pro. Amino acid amides and methyl esters are also readily hydrolyzed, but rates on arylamides are exceedingly low.. The enzyme catalyses Release of an N-terminal amino acid, preferentially leucine, but not glutamic or aspartic acids.. Its function is as follows. Presumably involved in the processing and regular turnover of intracellular proteins. Catalyzes the removal of unsubstituted N-terminal amino acids from various peptides. The chain is Probable cytosol aminopeptidase from Rhodopseudomonas palustris (strain BisB18).